Consider the following 217-residue polypeptide: Probable transaldolase (217 aa).

Lys83 serves as the catalytic Schiff-base intermediate with substrate.

Belongs to the transaldolase family. Type 3B subfamily.

It localises to the cytoplasm. The catalysed reaction is D-sedoheptulose 7-phosphate + D-glyceraldehyde 3-phosphate = D-erythrose 4-phosphate + beta-D-fructose 6-phosphate. It participates in carbohydrate degradation; pentose phosphate pathway; D-glyceraldehyde 3-phosphate and beta-D-fructose 6-phosphate from D-ribose 5-phosphate and D-xylulose 5-phosphate (non-oxidative stage): step 2/3. In terms of biological role, transaldolase is important for the balance of metabolites in the pentose-phosphate pathway. In Dinoroseobacter shibae (strain DSM 16493 / NCIMB 14021 / DFL 12), this protein is Probable transaldolase.